The sequence spans 642 residues: Polyglycine hydrolase (642 aa).

A signal peptide spans 1 to 23 (MYTSRLLLSNLASCLSLATLVAS). N-linked (GlcNAc...) asparagine glycans are attached at residues asparagine 37, asparagine 100, asparagine 159, and asparagine 341. Cysteines 149 and 183 form a disulfide. The active site involves serine 370. 5 N-linked (GlcNAc...) asparagine glycosylation sites follow: asparagine 390, asparagine 407, asparagine 444, asparagine 487, and asparagine 494.

It belongs to the peptidase S12 family.

It is found in the secreted. The enzyme catalyses a glycyl-glycyl-[protein] + H2O = N-terminal glycyl-[protein] + [protein]-C-terminal glycine. With respect to regulation, not inhibited by phenylmethylsulfonyl fluoride (PMSF; serine peptidase class S1 inhibitor), clavulanic acid (beta-lactamase inhibitor) or ampicillin (penicillin-binding protein (PBP) inhibitor). Serine-type endopeptidase that cleaves Gly-Gly bonds in the polyglycine linker of host plant class IV chitinases to disrupt their chitin-binding, and thereby plays a role in lowering the defense responses of the host to the fungus. Degrades Z.mays Endochitinase A (CHIA). Degrades Z.mays Endochitinase B (CHIB). Has no activity on Z.mays CHIA following CHIA cleavage by fungalysin. In Epicoccum sorghinum (Endophyte fungus), this protein is Polyglycine hydrolase.